The primary structure comprises 316 residues: Pantothenate kinase (316 aa).

ATP is bound at residue 95–102 (GSVAVGKS).

The protein belongs to the prokaryotic pantothenate kinase family.

It is found in the cytoplasm. The catalysed reaction is (R)-pantothenate + ATP = (R)-4'-phosphopantothenate + ADP + H(+). It participates in cofactor biosynthesis; coenzyme A biosynthesis; CoA from (R)-pantothenate: step 1/5. The sequence is that of Pantothenate kinase from Cronobacter sakazakii (strain ATCC BAA-894) (Enterobacter sakazakii).